A 788-amino-acid polypeptide reads, in one-letter code: Autophagy-related protein 9 (788 aa).

The Cytoplasmic portion of the chain corresponds to 1–171 (MTDKSTFLSV…EAYMYYTGKG (171 aa)). The segment covering 32–42 (ILRRVEEEHAQ) has biased composition (basic and acidic residues). The segment at 32–127 (ILRRVEEEHA…TGVANGGLPR (96 aa)) is disordered. Low complexity predominate over residues 44–58 (SDNSNSDNDSGNDSD). Over residues 101–112 (SFAQGTKTQTPI) the composition is skewed to polar residues. A helical membrane pass occupies residues 172-192 (LVSIILSRVLNMSTIMFVVVF). Topologically, residues 193–222 (STYLGSCIDYSKIKGSRTLDEVHVKQCYAK) are lumenal. A helical membrane pass occupies residues 223–243 (LGSFHVFVLWTFFVLWFMKLF). Over 244-390 (QYVKDIRRLV…QILSTGLRRR (147 aa)) the chain is Cytoplasmic. Residue Phe-391 is an intramembrane region. Over 392 to 479 (VFAAIMNVVF…PKEKTALVSK (88 aa)) the chain is Cytoplasmic. The chain crosses the membrane as a helical span at residues 480-500 (FVSFIAGSFAAVLGIASLIDP). The Lumenal portion of the chain corresponds to 501–512 (ELFLMFEISANR). The helical transmembrane segment at 513–533 (TVLFYIGVFGSILAVSRSLIP) threads the bilayer. The Cytoplasmic segment spans residues 534–579 (EETLVFDPEISLRYVAEFTHYLPPEWEGKLHTEQVKNEFSLMYEMR). Residues 580 to 600 (LIILLKELASIFLAPFILYYS) lie within the membrane without spanning it. At 601 to 788 (LTQSCDDIVD…KKTDNMNLGA (188 aa)) the chain is on the cytoplasmic side. A disordered region spans residues 715-736 (LSPAAPTATTATSGTATGAAPR). Residues 716–734 (SPAAPTATTATSGTATGAA) show a composition bias toward low complexity.

This sequence belongs to the ATG9 family. As to quaternary structure, homotrimer; forms a homotrimer with a central pore that forms a path between the two membrane leaflets. Phosphorylated by ATG1. ATG1 phosphorylation is required for preautophagosome elongation.

Its subcellular location is the preautophagosomal structure membrane. It is found in the cytoplasmic vesicle membrane. The protein resides in the golgi apparatus membrane. It localises to the endoplasmic reticulum membrane. It catalyses the reaction a 1,2-diacyl-sn-glycero-3-phosphocholine(in) = a 1,2-diacyl-sn-glycero-3-phosphocholine(out). It carries out the reaction a 1,2-diacyl-sn-glycero-3-phospho-L-serine(in) = a 1,2-diacyl-sn-glycero-3-phospho-L-serine(out). The enzyme catalyses a 1,2-diacyl-sn-glycero-3-phosphoethanolamine(in) = a 1,2-diacyl-sn-glycero-3-phosphoethanolamine(out). The catalysed reaction is a 1,2-diacyl-sn-glycero-3-phospho-(1D-myo-inositol-3-phosphate)(in) = a 1,2-diacyl-sn-glycero-3-phospho-(1D-myo-inositol-3-phosphate)(out). Phospholipid scramblase involved in autophagy and cytoplasm to vacuole transport (Cvt) vesicle formation. Cycles between the preautophagosomal structure/phagophore assembly site (PAS) and the cytoplasmic vesicle pool and supplies membrane for the growing autophagosome. Lipid scramblase activity plays a key role in preautophagosomal structure/phagophore assembly by distributing the phospholipids that arrive through ATG2 from the cytoplasmic to the luminal leaflet of the bilayer, thereby driving autophagosomal membrane expansion. Required for mitophagy. Also involved in endoplasmic reticulum-specific autophagic process and is essential for the survival of cells subjected to severe ER stress. Different machineries are required for anterograde trafficking to the PAS during either the Cvt pathway or bulk autophagy and for retrograde trafficking. This is Autophagy-related protein 9 from Yarrowia lipolytica (strain CLIB 122 / E 150) (Yeast).